We begin with the raw amino-acid sequence, 1171 residues long: Pyruvate-flavodoxin oxidoreductase (1171 aa).

4Fe-4S ferredoxin-type domains follow at residues Glu-682 to Leu-711 and Tyr-736 to Leu-767. Cys-691, Cys-694, Cys-697, Cys-701, Cys-745, Cys-748, Cys-751, Cys-755, Cys-811, Cys-814, Cys-839, and Cys-1072 together coordinate [4Fe-4S] cluster.

It belongs to the pyruvate:ferredoxin/flavodoxin oxidoreductase family. The cofactor is [4Fe-4S] cluster.

It catalyses the reaction oxidized [flavodoxin] + pyruvate + CoA + 2 H(+) = reduced [flavodoxin] + acetyl-CoA + CO2. Functionally, oxidoreductase required for the transfer of electrons from pyruvate to flavodoxin, which reduces nitrogenase. In Klebsiella pneumoniae, this protein is Pyruvate-flavodoxin oxidoreductase (nifJ).